The primary structure comprises 303 residues: Bifunctional protein FolD (303 aa).

Residues 169–171 (GRG), Thr-196, and Val-237 contribute to the NADP(+) site.

The protein belongs to the tetrahydrofolate dehydrogenase/cyclohydrolase family. In terms of assembly, homodimer.

It catalyses the reaction (6R)-5,10-methylene-5,6,7,8-tetrahydrofolate + NADP(+) = (6R)-5,10-methenyltetrahydrofolate + NADPH. It carries out the reaction (6R)-5,10-methenyltetrahydrofolate + H2O = (6R)-10-formyltetrahydrofolate + H(+). The protein operates within one-carbon metabolism; tetrahydrofolate interconversion. Its function is as follows. Catalyzes the oxidation of 5,10-methylenetetrahydrofolate to 5,10-methenyltetrahydrofolate and then the hydrolysis of 5,10-methenyltetrahydrofolate to 10-formyltetrahydrofolate. This Micrococcus luteus (strain ATCC 4698 / DSM 20030 / JCM 1464 / CCM 169 / CCUG 5858 / IAM 1056 / NBRC 3333 / NCIMB 9278 / NCTC 2665 / VKM Ac-2230) (Micrococcus lysodeikticus) protein is Bifunctional protein FolD.